Consider the following 249-residue polypeptide: Enolase-phosphatase E1 (249 aa).

This sequence belongs to the HAD-like hydrolase superfamily. MasA/MtnC family. As to quaternary structure, monomer. Mg(2+) serves as cofactor.

It carries out the reaction 5-methylsulfanyl-2,3-dioxopentyl phosphate + H2O = 1,2-dihydroxy-5-(methylsulfanyl)pent-1-en-3-one + phosphate. It functions in the pathway amino-acid biosynthesis; L-methionine biosynthesis via salvage pathway; L-methionine from S-methyl-5-thio-alpha-D-ribose 1-phosphate: step 3/6. The protein operates within amino-acid biosynthesis; L-methionine biosynthesis via salvage pathway; L-methionine from S-methyl-5-thio-alpha-D-ribose 1-phosphate: step 4/6. Its function is as follows. Bifunctional enzyme that catalyzes the enolization of 2,3-diketo-5-methylthiopentyl-1-phosphate (DK-MTP-1-P) into the intermediate 2-hydroxy-3-keto-5-methylthiopentenyl-1-phosphate (HK-MTPenyl-1-P), which is then dephosphorylated to form the acireductone 1,2-dihydroxy-3-keto-5-methylthiopentene (DHK-MTPene). The polypeptide is Enolase-phosphatase E1 (Synechococcus sp. (strain RCC307)).